The chain runs to 449 residues: Probable glycine dehydrogenase (decarboxylating) subunit 1 (449 aa).

This sequence belongs to the GcvP family. N-terminal subunit subfamily. In terms of assembly, the glycine cleavage system is composed of four proteins: P, T, L and H. In this organism, the P 'protein' is a heterodimer of two subunits.

The catalysed reaction is N(6)-[(R)-lipoyl]-L-lysyl-[glycine-cleavage complex H protein] + glycine + H(+) = N(6)-[(R)-S(8)-aminomethyldihydrolipoyl]-L-lysyl-[glycine-cleavage complex H protein] + CO2. Its function is as follows. The glycine cleavage system catalyzes the degradation of glycine. The P protein binds the alpha-amino group of glycine through its pyridoxal phosphate cofactor; CO(2) is released and the remaining methylamine moiety is then transferred to the lipoamide cofactor of the H protein. This Pyrococcus abyssi (strain GE5 / Orsay) protein is Probable glycine dehydrogenase (decarboxylating) subunit 1.